Consider the following 300-residue polypeptide: Ribosomal protein L11 methyltransferase (300 aa).

Positions 152, 173, 195, and 234 each coordinate S-adenosyl-L-methionine.

It belongs to the methyltransferase superfamily. PrmA family.

The protein resides in the cytoplasm. The enzyme catalyses L-lysyl-[protein] + 3 S-adenosyl-L-methionine = N(6),N(6),N(6)-trimethyl-L-lysyl-[protein] + 3 S-adenosyl-L-homocysteine + 3 H(+). Methylates ribosomal protein L11. This chain is Ribosomal protein L11 methyltransferase, found in Burkholderia cenocepacia (strain ATCC BAA-245 / DSM 16553 / LMG 16656 / NCTC 13227 / J2315 / CF5610) (Burkholderia cepacia (strain J2315)).